Consider the following 618-residue polypeptide: Vacuolar-sorting receptor 5 (618 aa).

Residues 1 to 23 (MSPSNKGTVLALILALTMVVVNG) form the signal peptide. Topologically, residues 24–563 (FSSRFFVEKS…IERRSGSRSR (540 aa)) are lumenal. In terms of domain architecture, PA spans 58-164 (KYGGFMIGSV…SFGDSLKKAL (107 aa)). Asn-81, Asn-293, and Asn-430 each carry an N-linked (GlcNAc...) asparagine glycan. 2 consecutive EGF-like domains span residues 412–462 (ETNE…TSCK) and 465–511 (GPAR…LKCE). Disulfide bonds link Cys-416–Cys-434, Cys-423–Cys-443, Cys-445–Cys-461, Cys-469–Cys-489, Cys-476–Cys-497, Cys-499–Cys-510, and Cys-540–Cys-553. An EGF-like 3; calcium-binding domain is found at 512 to 554 (DIDECKEKSACKCDGCKCKNNWGGYECKCSNNSIYMKEEDTCI). Asn-542 carries an N-linked (GlcNAc...) asparagine glycan. A helical transmembrane segment spans residues 564-584 (GLFTIVVLTAIAGISLGAYIF). Topologically, residues 585–618 (YKYHLQSYMDSEIVSIMSQYIPLDSQSINQDSFK) are cytoplasmic. Positions 604–607 (YIPL) match the Tyrosine-based internalization motif motif.

It belongs to the VSR (BP-80) family. In terms of tissue distribution, expressed in seedlings, roots, leaves, flowers and siliques.

The protein localises to the membrane. Its subcellular location is the golgi apparatus membrane. It is found in the cytoplasmic vesicle. The protein resides in the clathrin-coated vesicle membrane. It localises to the prevacuolar compartment membrane. Vacuolar-sorting receptor (VSR) involved in clathrin-coated vesicles sorting from Golgi apparatus to vacuoles. The polypeptide is Vacuolar-sorting receptor 5 (VSR5) (Arabidopsis thaliana (Mouse-ear cress)).